The primary structure comprises 1177 residues: Lysylphosphatidylglycerol biosynthesis bifunctional protein LysX (1177 aa).

2 disordered regions span residues 1 to 40 (MRRAGRSRQFSSVEEAFSTSAARPGPRGRRSGRENTAKFV) and 61 to 85 (VTLASPGSRSGSGPRSGPRLGPRNR). A phosphatidylglycerol lysyltransferase region spans residues 1–676 (MRRAGRSRQF…LLHHDGSAPD (676 aa)). Over residues 65-85 (SPGSRSGSGPRSGPRLGPRNR) the composition is skewed to low complexity. 6 helical membrane passes run 93-113 (VPAAAGWTVGVIATVSLLGSV), 135-155 (FPDTSIAWSFVLALLAAALTA), 159-179 (IAWLLLLGNMILAAALNVADI), 189-209 (IFGENLGFAVHIVAIVLLVLA), 227-247 (AVLVAGDVVGILVSWGLVELF), and 281-301 (VFLNAIFGLFGALALIMATIV). The disordered stretch occupies residues 673-693 (SAPDVSGLRPERTDAEEARSR). Residues 677-1177 (VSGLRPERTD…TLPFPLAKPH (501 aa)) are lysine--tRNA ligase. The span at 681–693 (RPERTDAEEARSR) shows a compositional bias: basic and acidic residues. The OB DNA-binding region spans 738-816 (ITVAGRILRI…SLIVTDWRMI (79 aa)). Positions 1089 and 1096 each coordinate Mg(2+).

The protein in the N-terminal section; belongs to the LPG synthetase family. In the C-terminal section; belongs to the class-II aminoacyl-tRNA synthetase family. Requires Mg(2+) as cofactor.

The protein localises to the cell membrane. The catalysed reaction is tRNA(Lys) + L-lysine + ATP = L-lysyl-tRNA(Lys) + AMP + diphosphate. The enzyme catalyses L-lysyl-tRNA(Lys) + a 1,2-diacyl-sn-glycero-3-phospho-(1'-sn-glycerol) = a 1,2-diacyl-sn-glycero-3-phospho-1'-(3'-O-L-lysyl)-sn-glycerol + tRNA(Lys). Functionally, catalyzes the production of L-lysyl-tRNA(Lys)transfer and the transfer of a lysyl group from L-lysyl-tRNA(Lys) to membrane-bound phosphatidylglycerol (PG), which produces lysylphosphatidylglycerol (LPG), one of the components of the bacterial membrane with a positive net charge. LPG synthesis contributes to the resistance to cationic antimicrobial peptides (CAMPs) and likely protects M.tuberculosis against the CAMPs produced by competiting microorganisms (bacteriocins). In fact, the modification of anionic phosphatidylglycerol with positively charged L-lysine results in repulsion of the peptides. This is Lysylphosphatidylglycerol biosynthesis bifunctional protein LysX (lysX) from Mycolicibacterium paratuberculosis (strain ATCC BAA-968 / K-10) (Mycobacterium paratuberculosis).